A 309-amino-acid chain; its full sequence is Transcription elongation factor S-II (309 aa).

A TFIIS N-terminal domain is found at 5–79 (EVLVHVKNLE…SSWKDAINKN (75 aa)). The interval 78–142 (KNKRSRQAQQ…NSKNDGVDTA (65 aa)) is disordered. The span at 88–102 (HHQDHAPGNAEDKTT) shows a compositional bias: basic and acidic residues. Over residues 103-120 (VGESVNGVQQPASSQSDA) the composition is skewed to polar residues. The residue at position 116 (serine 116) is a Phosphoserine. A TFIIS central domain is found at 148–264 (LRDQVLKALY…NAQGATIERS (117 aa)). The TFIIS-type zinc finger occupies 267–307 (DRFTCGKCKEKKVSYYQLQTRSADEPLTTFCTCEACGNRWK). Positions 271, 274, 299, and 302 each coordinate Zn(2+).

This sequence belongs to the TFS-II family.

The protein resides in the nucleus. Functionally, necessary for efficient RNA polymerase II transcription elongation past template-encoded arresting sites. The arresting sites in DNA have the property of trapping a certain fraction of elongating RNA polymerases that pass through, resulting in locked ternary complexes. Cleavage of the nascent transcript by S-II allows the resumption of elongation from the new 3'-terminus. Its function is as follows. Can promote the transfer of one strand of a double-stranded DNA molecule to a homologous single strand and thus may be involved in recombination. In Saccharomyces cerevisiae (strain ATCC 204508 / S288c) (Baker's yeast), this protein is Transcription elongation factor S-II (DST1).